The following is a 67-amino-acid chain: Bowman-Birk type proteinase inhibitor A4 (67 aa).

Intrachain disulfides connect cysteine 10-cysteine 29, cysteine 16-cysteine 27, cysteine 36-cysteine 43, and cysteine 40-cysteine 57.

It belongs to the Bowman-Birk serine protease inhibitor family. In terms of tissue distribution, expressed in bulb (at protein level).

Serine protease inhibitor. Inhibits trypsin (Ki=12nM) and weakly inhibits chymotrypsin with (Ki=460nm). Does not inhibit bacterial subtilisin. The sequence is that of Bowman-Birk type proteinase inhibitor A4 from Hyacinthus orientalis (Common hyacinth).